Reading from the N-terminus, the 153-residue chain is 6,7-dimethyl-8-ribityllumazine synthase (153 aa).

5-amino-6-(D-ribitylamino)uracil contacts are provided by residues Phe21, 55–57 (AFE), and 79–81 (CVI). 84-85 (AT) provides a ligand contact to (2S)-2-hydroxy-3-oxobutyl phosphate. His87 serves as the catalytic Proton donor. Residue Phe112 participates in 5-amino-6-(D-ribitylamino)uracil binding. Arg126 lines the (2S)-2-hydroxy-3-oxobutyl phosphate pocket.

It belongs to the DMRL synthase family. Forms an icosahedral capsid composed of 60 subunits, arranged as a dodecamer of pentamers.

The enzyme catalyses (2S)-2-hydroxy-3-oxobutyl phosphate + 5-amino-6-(D-ribitylamino)uracil = 6,7-dimethyl-8-(1-D-ribityl)lumazine + phosphate + 2 H2O + H(+). The protein operates within cofactor biosynthesis; riboflavin biosynthesis; riboflavin from 2-hydroxy-3-oxobutyl phosphate and 5-amino-6-(D-ribitylamino)uracil: step 1/2. Its function is as follows. Catalyzes the formation of 6,7-dimethyl-8-ribityllumazine by condensation of 5-amino-6-(D-ribitylamino)uracil with 3,4-dihydroxy-2-butanone 4-phosphate. This is the penultimate step in the biosynthesis of riboflavin. This Staphylococcus epidermidis (strain ATCC 35984 / DSM 28319 / BCRC 17069 / CCUG 31568 / BM 3577 / RP62A) protein is 6,7-dimethyl-8-ribityllumazine synthase.